Consider the following 141-residue polypeptide: Galactose-6-phosphate isomerase subunit LacA (141 aa).

Belongs to the LacAB/RpiB family. In terms of assembly, heteromultimeric protein consisting of LacA and LacB.

The catalysed reaction is aldehydo-D-galactose 6-phosphate = keto-D-tagatose 6-phosphate. The protein operates within carbohydrate metabolism; D-galactose 6-phosphate degradation; D-tagatose 6-phosphate from D-galactose 6-phosphate: step 1/1. The sequence is that of Galactose-6-phosphate isomerase subunit LacA from Streptococcus agalactiae serotype Ia (strain ATCC 27591 / A909 / CDC SS700).